Here is a 342-residue protein sequence, read N- to C-terminus: Heat-inducible transcription repressor HrcA (342 aa).

Belongs to the HrcA family.

Its function is as follows. Negative regulator of class I heat shock genes (grpE-dnaK-dnaJ and groELS operons). Prevents heat-shock induction of these operons. This chain is Heat-inducible transcription repressor HrcA, found in Shouchella clausii (strain KSM-K16) (Alkalihalobacillus clausii).